Reading from the N-terminus, the 132-residue chain is UPF0329 protein ECU07_0050/ECU09_2020 (132 aa).

Belongs to the UPF0329 family.

This is UPF0329 protein ECU07_0050/ECU09_2020 from Encephalitozoon cuniculi (strain GB-M1) (Microsporidian parasite).